The chain runs to 153 residues: Interleukin-4 (153 aa).

The first 24 residues, 1-24 (MGLTSQLLPPLFFLLACAGNFVHG), serve as a signal peptide directing secretion. Disulfide bonds link cysteine 27–cysteine 151, cysteine 48–cysteine 89, and cysteine 70–cysteine 123. An N-linked (GlcNAc...) asparagine glycan is attached at asparagine 62.

The protein belongs to the IL-4/IL-13 family. In terms of assembly, interacts with IL4R. Interacts with IL13RA1.

It localises to the secreted. Functionally, cytokine secreted primarily by mast cells, T-cells, eosinophils, and basophils that plays a role in regulating antibody production, hematopoiesis and inflammation, and the development of effector T-cell responses. Induces the expression of class II MHC molecules on resting B-cells. Enhances both secretion and cell surface expression of IgE and IgG1. Also regulates the expression of the low affinity Fc receptor for IgE (CD23) on both lymphocytes and monocytes. Positively regulates IL31RA expression in macrophages. Stimulates autophagy in dendritic cells by interfering with mTORC1 signaling and through the induction of RUFY4. In addition, plays a critical role in higher functions of the normal brain, such as memory and learning. Upon binding to IL4, IL4R receptor dimerizes either with the common IL2R gamma chain/IL2RG to produce the type 1 signaling complex, located mainly on hematopoietic cells, or with the IL13RA1 to produce the type 2 complex, which is also expressed on nonhematopoietic cells. Engagement of both types of receptors initiates JAK3 and to a lower extend JAK1 phosphorylation leading to activation of the signal transducer and activator of transcription 6/STAT6. The chain is Interleukin-4 (IL4) from Homo sapiens (Human).